The following is a 235-amino-acid chain: Lipoprotein-releasing system ATP-binding protein LolD (235 aa).

In terms of domain architecture, ABC transporter spans 5–235 (FALANIYKSF…SIDESGFNKI (231 aa)). 40–47 (GKSGSGKS) serves as a coordination point for ATP.

The protein belongs to the ABC transporter superfamily. Lipoprotein translocase (TC 3.A.1.125) family. The complex is composed of two ATP-binding proteins (LolD) and two transmembrane proteins (LolC and LolE).

The protein resides in the cell inner membrane. Functionally, part of the ABC transporter complex LolCDE involved in the translocation of mature outer membrane-directed lipoproteins, from the inner membrane to the periplasmic chaperone, LolA. Responsible for the formation of the LolA-lipoprotein complex in an ATP-dependent manner. The sequence is that of Lipoprotein-releasing system ATP-binding protein LolD from Ehrlichia chaffeensis (strain ATCC CRL-10679 / Arkansas).